The primary structure comprises 384 residues: MDEGIRASGGIRACQTGKQKQGRKRPVTGKKRIVVGMSGGVDSSVTAWLLKQQGHEVIGVFMQNWEDDNDDEYCSIKQDALDAMSVADIVGIDMEIVNFAKEYKDRVFSYFLKEYSAGRTPNPDVLCNAEIKFKAFLDYAMELGADCIATGHYARKLEQDGTHYLMKAVDHTKDQSYFLYRLQQHQLAKAIFPLGDIRKTEVRRLAEEAGLPTAAKKDSTGICFIGERPFREFLQRYLPTSPGQMVTPDGKVVGEHIGLMYYTLGQRKGLTIGGSRDGNGEPWFVAGKDIPGNKLIVVQGHDHPLLLKPTLSMADLSWTLPDAPAPGEYSAKNRYRMADAACTLSPIVDGQASLTFQEKQWAVTPGQSAVLYHGDICLGGGIIQ.

Positions 1–26 (MDEGIRASGGIRACQTGKQKQGRKRP) are disordered. ATP contacts are provided by residues 36-43 (GMSGGVDS) and methionine 62. The interaction with target base in tRNA stretch occupies residues 122–124 (NPD). Cysteine 127 (nucleophile) is an active-site residue. A disulfide bridge links cysteine 127 with cysteine 223. Glycine 151 serves as a coordination point for ATP. Positions 173-175 (KDQ) are interaction with tRNA. Cysteine 223 acts as the Cysteine persulfide intermediate in catalysis. Residues 334–335 (RY) are interaction with tRNA.

Belongs to the MnmA/TRMU family.

It localises to the cytoplasm. The enzyme catalyses S-sulfanyl-L-cysteinyl-[protein] + uridine(34) in tRNA + AH2 + ATP = 2-thiouridine(34) in tRNA + L-cysteinyl-[protein] + A + AMP + diphosphate + H(+). Catalyzes the 2-thiolation of uridine at the wobble position (U34) of tRNA, leading to the formation of s(2)U34. This Chromobacterium violaceum (strain ATCC 12472 / DSM 30191 / JCM 1249 / CCUG 213 / NBRC 12614 / NCIMB 9131 / NCTC 9757 / MK) protein is tRNA-specific 2-thiouridylase MnmA.